We begin with the raw amino-acid sequence, 335 residues long: Phosphate acyltransferase (335 aa).

The protein belongs to the PlsX family. In terms of assembly, homodimer. Probably interacts with PlsY.

It is found in the cytoplasm. The catalysed reaction is a fatty acyl-[ACP] + phosphate = an acyl phosphate + holo-[ACP]. Its pathway is lipid metabolism; phospholipid metabolism. In terms of biological role, catalyzes the reversible formation of acyl-phosphate (acyl-PO(4)) from acyl-[acyl-carrier-protein] (acyl-ACP). This enzyme utilizes acyl-ACP as fatty acyl donor, but not acyl-CoA. The polypeptide is Phosphate acyltransferase (Desulfitobacterium hafniense (strain Y51)).